The sequence spans 372 residues: tRNA-specific 2-thiouridylase MnmA (372 aa).

Residues 16 to 23 and M42 each bind ATP; that span reads GMSGGVDS. An interaction with target base in tRNA region spans residues 102 to 104; the sequence is NPD. C107 (nucleophile) is an active-site residue. Cysteines 107 and 205 form a disulfide. G132 is a binding site for ATP. The interaction with tRNA stretch occupies residues 155-157; sequence KDQ. C205 functions as the Cysteine persulfide intermediate in the catalytic mechanism. The tract at residues 317-318 is interaction with tRNA; sequence RY.

It belongs to the MnmA/TRMU family.

The protein resides in the cytoplasm. The catalysed reaction is S-sulfanyl-L-cysteinyl-[protein] + uridine(34) in tRNA + AH2 + ATP = 2-thiouridine(34) in tRNA + L-cysteinyl-[protein] + A + AMP + diphosphate + H(+). Its function is as follows. Catalyzes the 2-thiolation of uridine at the wobble position (U34) of tRNA, leading to the formation of s(2)U34. The protein is tRNA-specific 2-thiouridylase MnmA of Shewanella sp. (strain ANA-3).